The primary structure comprises 174 residues: Ribosome maturation factor RimM (174 aa).

The region spanning 97-171 (SDGEYYWCDL…RMTVSLPEGL (75 aa)) is the PRC barrel domain.

The protein belongs to the RimM family. Binds ribosomal protein uS19.

It is found in the cytoplasm. Functionally, an accessory protein needed during the final step in the assembly of 30S ribosomal subunit, possibly for assembly of the head region. Essential for efficient processing of 16S rRNA. May be needed both before and after RbfA during the maturation of 16S rRNA. It has affinity for free ribosomal 30S subunits but not for 70S ribosomes. In Geotalea daltonii (strain DSM 22248 / JCM 15807 / FRC-32) (Geobacter daltonii), this protein is Ribosome maturation factor RimM.